The sequence spans 141 residues: Hemoglobin subunit alpha (141 aa).

The region spanning 1 to 141 (VLSPADKTNV…VSTVLTSKYR (141 aa)) is the Globin domain. Ser3 is modified (phosphoserine). Position 7 is an N6-succinyllysine (Lys7). Phosphothreonine is present on Thr8. The residue at position 11 (Lys11) is an N6-succinyllysine. Lys16 bears the N6-acetyllysine; alternate mark. Lys16 carries the post-translational modification N6-succinyllysine; alternate. Tyr24 carries the phosphotyrosine modification. Ser35 carries the post-translational modification Phosphoserine. The residue at position 40 (Lys40) is an N6-succinyllysine. Position 49 is a phosphoserine (Ser49). His58 serves as a coordination point for O2. A heme b-binding site is contributed by His87. Phosphoserine is present on Ser102. Position 108 is a phosphothreonine (Thr108). A phosphoserine mark is found at Ser124 and Ser131. Phosphothreonine occurs at positions 134 and 137. Residue Ser138 is modified to Phosphoserine.

It belongs to the globin family. As to quaternary structure, heterotetramer of two alpha chains and two beta chains. Red blood cells.

In terms of biological role, involved in oxygen transport from the lung to the various peripheral tissues. This chain is Hemoglobin subunit alpha, found in Otospermophilus beecheyi (California ground squirrel).